The primary structure comprises 101 residues: MSVEKMTKVEESFQKAMGLKKTVDRWRNSHTHCLWQMALGQRRNPYATLRMQDTMVQELALAKKQLLMVRQAALHQLFEKEHQQYQQELNQMGKAFYVERF.

As to quaternary structure, microtubule inner protein component of sperm flagellar doublet microtubules. In terms of tissue distribution, expressed in airway epithelial cells.

The protein localises to the cytoplasm. The protein resides in the cytoskeleton. It localises to the cilium axoneme. Its subcellular location is the flagellum axoneme. Functionally, microtubule inner protein (MIP) part of the dynein-decorated doublet microtubules (DMTs) in cilia axoneme, which is required for motile cilia beating. The protein is Cilia- and flagella-associated protein 141 of Homo sapiens (Human).